Consider the following 132-residue polypeptide: UPF0299 membrane protein CKO_00648 (132 aa).

The next 4 membrane-spanning stretches (helical) occupy residues 7–27 (IIWQYLRAFVLIYACLYAGIF), 31–51 (LLPITIPGSIIGMLILFVLLA), 63–83 (GCYVLIRYMALLFVPIGVGVM), and 93–113 (FGPVVVSCAISTLVVFLVVSW).

This sequence belongs to the UPF0299 family.

It localises to the cell inner membrane. The protein is UPF0299 membrane protein CKO_00648 of Citrobacter koseri (strain ATCC BAA-895 / CDC 4225-83 / SGSC4696).